Reading from the N-terminus, the 102-residue chain is Small ribosomal subunit protein bS18c (102 aa).

A compositionally biased stretch (basic residues) spans 1 to 19; that stretch reads MDKTKRPLRKSKRSFRRRL. Residues 1–26 are disordered; that stretch reads MDKTKRPLRKSKRSFRRRLPPPIGSG.

Belongs to the bacterial ribosomal protein bS18 family. As to quaternary structure, part of the 30S ribosomal subunit.

It localises to the plastid. Its subcellular location is the chloroplast. The polypeptide is Small ribosomal subunit protein bS18c (Piper cenocladum (Ant piper)).